A 400-amino-acid polypeptide reads, in one-letter code: Homoserine O-acetyltransferase (400 aa).

Residues 1–11 (MVKVQSIQSQA) show a composition bias toward polar residues. Residues 1 to 24 (MVKVQSIQSQAVHAEERAHEADHP) are disordered. Residues 13–23 (HAEERAHEADH) are compositionally biased toward basic and acidic residues. Residues 64-373 (NAILVCHALT…TDRGHDAFLL (310 aa)) form the AB hydrolase-1 domain. Ser169 (nucleophile) is an active-site residue. Residue Arg239 participates in substrate binding. Catalysis depends on residues Asp335 and His368. A substrate-binding site is contributed by Asp369.

The protein belongs to the AB hydrolase superfamily. MetX family. As to quaternary structure, homodimer.

It is found in the cytoplasm. It carries out the reaction L-homoserine + acetyl-CoA = O-acetyl-L-homoserine + CoA. It participates in amino-acid biosynthesis; L-methionine biosynthesis via de novo pathway; O-acetyl-L-homoserine from L-homoserine: step 1/1. In terms of biological role, transfers an acetyl group from acetyl-CoA to L-homoserine, forming acetyl-L-homoserine. The sequence is that of Homoserine O-acetyltransferase from Rhodopseudomonas palustris (strain BisB18).